A 251-amino-acid polypeptide reads, in one-letter code: Cytochrome c oxidase subunit 2 (251 aa).

A propeptide spans methionine 1 to asparagine 15 (removed in mature form). Residues aspartate 16–threonine 30 are Mitochondrial intermembrane-facing. A helical membrane pass occupies residues proline 31 to threonine 64. The Mitochondrial matrix segment spans residues tyrosine 65–glycine 78. A helical transmembrane segment spans residues glutamine 79–aspartate 108. Over glutamate 109–glutamine 251 the chain is Mitochondrial intermembrane. Cu cation-binding residues include histidine 186, cysteine 221, glutamate 223, cysteine 225, histidine 229, and methionine 232. Position 223 (glutamate 223) interacts with Mg(2+).

The protein belongs to the cytochrome c oxidase subunit 2 family. Component of the cytochrome c oxidase (complex IV, CIV), a multisubunit enzyme composed of 12 subunits. The complex is composed of a catalytic core of 3 subunits COX1, COX2 and COX3, encoded in the mitochondrial DNA, and 9 supernumerary subunits COX4, COX5A (or COX5B), COX6, COX7, COX8, COX9, COX12, COX13 and COX26, which are encoded in the nuclear genome. The complex exists as a monomer or a dimer and forms supercomplexes (SCs) in the inner mitochondrial membrane with a dimer of ubiquinol-cytochrome c oxidoreductase (cytochrome b-c1 complex, complex III, CIII), resulting in 2 different assemblies (supercomplexes III(2)IV and III(2)IV(2)). Cu cation serves as cofactor. The N-terminal sequence of COX2 is processed by IMP1.

It is found in the mitochondrion inner membrane. It carries out the reaction 4 Fe(II)-[cytochrome c] + O2 + 8 H(+)(in) = 4 Fe(III)-[cytochrome c] + 2 H2O + 4 H(+)(out). Component of the cytochrome c oxidase, the last enzyme in the mitochondrial electron transport chain which drives oxidative phosphorylation. The respiratory chain contains 3 multisubunit complexes succinate dehydrogenase (complex II, CII), ubiquinol-cytochrome c oxidoreductase (cytochrome b-c1 complex, complex III, CIII) and cytochrome c oxidase (complex IV, CIV), that cooperate to transfer electrons derived from NADH and succinate to molecular oxygen, creating an electrochemical gradient over the inner membrane that drives transmembrane transport and the ATP synthase. Cytochrome c oxidase is the component of the respiratory chain that catalyzes the reduction of oxygen to water. Electrons originating from reduced cytochrome c in the intermembrane space (IMS) are transferred via the dinuclear copper A center (CU(A)) of COX2 and heme A of COX1 to the active site in COX1, a binuclear center (BNC) formed by heme A3 and copper B (CU(B)). The BNC reduces molecular oxygen to 2 water molecules unsing 4 electrons from cytochrome c in the IMS and 4 protons from the mitochondrial matrix. COX2 is a catalytic core subunit which transfers the electrons from cytochrome c via its dinuclear copper A center (CU(A)) to the BNC of the COX1. This is Cytochrome c oxidase subunit 2 (COX2) from Saccharomyces cerevisiae (strain ATCC 204508 / S288c) (Baker's yeast).